The primary structure comprises 281 residues: Probable replication-associated protein repA1 (281 aa).

This sequence belongs to the IncFII RepA family.

This protein is essential for plasmid replication; it is involved in copy control functions. This chain is Probable replication-associated protein repA1 (repA1), found in Buchnera aphidicola subsp. Cinara cedri (strain Cc).